The following is a 173-amino-acid chain: Alpha-crystallin A chain (173 aa).

The residue at position 1 (Met1) is an N-acetylmethionine. Positions Met1–Glu63 are required for complex formation with BFSP1 and BFSP2. Gln6 carries the deamidated glutamine; partial modification. A Phosphoserine modification is found at Ser45. A Deamidated glutamine; partial modification is found at Gln50. Residues Leu52 to Ser162 form the sHSP domain. Lys70 carries the post-translational modification N6-acetyllysine. At Gln90 the chain carries Deamidated glutamine; partial. At Lys99 the chain carries N6-acetyllysine. His100 contributes to the Zn(2+) binding site. Asn101 bears the Deamidated asparagine; partial mark. Zn(2+)-binding residues include Glu102 and His107. Phosphoserine is present on Ser122. Asn123 carries the post-translational modification Deamidated asparagine; partial. A disordered region spans residues Lys145–Ser173. A Deamidated glutamine; partial modification is found at Gln147. Positions Gly153–Pro167 are enriched in basic and acidic residues. Position 154 (His154) interacts with Zn(2+). Ser162 carries O-linked (GlcNAc) serine glycosylation.

It belongs to the small heat shock protein (HSP20) family. Heteromer composed of three CRYAA and one CRYAB subunits. Inter-subunit bridging via zinc ions enhances stability, which is crucial as there is no protein turn over in the lens. Can also form homodimers and homotetramers (dimers of dimers) which serve as the building blocks of homooligomers. Within homooligomers, the zinc-binding motif is created from residues of 3 different molecules. His-100 and Glu-102 from one molecule are ligands of the zinc ion, and His-107 and His-154 residues from additional molecules complete the site with tetrahedral coordination geometry. Part of a complex required for lens intermediate filament formation composed of BFSP1, BFSP2 and CRYAA. Acetylation at Lys-70 may increase chaperone activity. Post-translationally, undergoes age-dependent proteolytical cleavage at the C-terminus.

The protein localises to the cytoplasm. It is found in the nucleus. Contributes to the transparency and refractive index of the lens. Acts as a chaperone, preventing aggregation of various proteins under a wide range of stress conditions. Required for the correct formation of lens intermediate filaments as part of a complex composed of BFSP1, BFSP2 and CRYAA. The chain is Alpha-crystallin A chain (CRYAA) from Eulemur fulvus fulvus (Brown lemur).